The chain runs to 77 residues: Conotoxin King-Kong 2 (77 aa).

Residues 1-22 (MKLTCMMIVAVLFLTAWTFVTA) form the signal peptide. A propeptide spanning residues 23–49 (DDSGNGLENLFSKAHHEMKNPEASNLN) is cleaved from the precursor. 3 cysteine pairs are disulfide-bonded: Cys52–Cys67, Cys59–Cys71, and Cys66–Cys76. Cys76 is subject to Cysteine amide.

This sequence belongs to the conotoxin O1 superfamily. Expressed by the venom duct.

It localises to the secreted. In Conus textile (Cloth-of-gold cone), this protein is Conotoxin King-Kong 2.